Reading from the N-terminus, the 165-residue chain is Iron sulfur cluster assembly protein 1, mitochondrial (165 aa).

The transit peptide at 1-27 directs the protein to the mitochondrion; sequence MLPVITRFARPALMAIRPVNAMGVLRA. The SSQ1 binding region stretch occupies residues 132–136; sequence LPPVK.

Belongs to the NifU family. As to quaternary structure, homodimer, but can exist as monomers or trimers. Oligomerization may be regulated by Zn(2+) availability. Component of the core Fe-S cluster (ISC) assembly machinery. Interacts with YFH1/frataxin with a 1 to 1 stoichiometry; the interaction is direct. Interacts with the mitochondrial co-chaperones JAC1 and SSQ1. Interacts with NFS1. Interacts with YAH1/ferredoxin; interacts with the reduced form. The cofactor is [2Fe-2S] cluster. Requires Zn(2+) as cofactor.

The protein resides in the mitochondrion matrix. It functions in the pathway cofactor biosynthesis; iron-sulfur cluster biosynthesis. Scaffold protein for the de novo synthesis of iron-sulfur (Fe-S) clusters within mitochondria, which is required for maturation of both mitochondrial and cytoplasmic [2Fe-2S] and [4Fe-4S] proteins. First, a [2Fe-2S] cluster is transiently assembled on the scaffold proteins ISU1 and ISU2. In a second step, the cluster is released from ISU1/ISU2, transferred to glutaredoxin GRX5, followed by the formation of mitochondrial [2Fe-2S] proteins, the synthesis of [4Fe-4S] clusters and their target-specific insertion into the recipient apoproteins. Cluster assembly on ISU1/ISU2 depends on the function of the cysteine desulfurase complex NFS1-ISD11, which serves as the sulfur donor for cluster synthesis, the iron-binding protein frataxin (YFH1) as the putative iron donor, and the electron transfer chain comprised of ferredoxin reductase ARH1 and ferredoxin YAH1, which receive their electrons from NADH. Fe-S cluster release from ISU1/ISU2 is achieved by interaction with the Hsp70 chaperone SSQ1, assisted by the DnaJ-like co-chaperone JAC1 and the nucleotide exchange factor MGE1. ISU1 is the major isoform in yeast, while ISU2 is not detectable in cells grown to stationary phase. Also involved in production of a sulfur precursor required for thiolation of cytoplasmic tRNAs. The polypeptide is Iron sulfur cluster assembly protein 1, mitochondrial (Saccharomyces cerevisiae (strain ATCC 204508 / S288c) (Baker's yeast)).